The chain runs to 422 residues: MTVSSTVQPLKACVPEATEAADMPHHTLSKSMTFANLDQYQYWHAVGPMLGRMLSNGSYSIHKQYEYLCLFAHVIIPKLGPFPGGRDIYKCLLGGTGSVELSQNVQKLGLTARVAFEPTSYIASTGVDPLNRHTVHATLVELRAIGSASIDMELHQMLVNELTLTDREERLMSPEAISGTAWKTQILLALDLGQTGITIKEYFYPALKASVTGQSVAKLCFSAIRKVDKQGRFEPASKAIETYMKTQSQTDLYFLSCDLVDPAATRIKLYLMELDMRLAKVEEHWTMGGKLNDEETLLGLKMLQELWVEFGIIEGMRNEPERPSLPGDPDTIVPFIMNYEMSPGEALPKPKFYFPLVGIPELKIANVLTAFFERYGMPEQAAVYRNNLQTPSKDLVIATDHQAWLSFSYTKKKGPYLTMYYH.

E100 is a binding site for substrate. The dimethylallyl diphosphate site is built by R113, K200, and Y202. Residue Y204 participates in substrate binding. 5 residues coordinate dimethylallyl diphosphate: K268, Y270, Y353, Y416, and Y420.

The protein belongs to the tryptophan dimethylallyltransferase family.

It functions in the pathway alkaloid biosynthesis. Its function is as follows. Roquefortine prenyltransferase; part of the gene cluster that mediates the biosynthesis of the mycotoxins roquefortine C and meleagrin. The first stage is catalyzed by the dipeptide synthase roqA which condenses histidine and tryptophan to produce histidyltryptophanyldiketopiperazine (HTD). HTD is then converted to roquefortine C through two possible pathways. In the first pathway, prenyltransferase roqD transforms HTD to the intermediate roquefortine D, which is in turn converted to roquefortine C by the cytochrome P450 monooxygenase roqR. In the second pathway, HTD is first converted to the intermediate dehydrohistidyltryptophanyldi-ketopiperazine (DHTD) by roqR which is then prenylated by roqD to form roquefortine C. Roquefortine C can be further transformed to meleagrin via three more reactions including oxydation to glandicolin A by roqM, which is further reduced to glandicoline B by roqO. Finally, glandicoline B is converted to meleagrin by the glandicoline B O-methyltransferase roqN. More studies identified further branching and additional metabolites produced by the roquefortine/meleagrin cluster, including roquefortine F, roquefortine L, roquefortine M, roquefortine N and neoxaline. The sequence is that of Roquefortine prenyltransferase roqD from Penicillium rubens (strain ATCC 28089 / DSM 1075 / NRRL 1951 / Wisconsin 54-1255) (Penicillium chrysogenum).